A 327-amino-acid polypeptide reads, in one-letter code: Pantothenate kinase (327 aa).

ATP is bound at residue glycine 105–serine 112.

Belongs to the prokaryotic pantothenate kinase family.

It is found in the cytoplasm. The enzyme catalyses (R)-pantothenate + ATP = (R)-4'-phosphopantothenate + ADP + H(+). It functions in the pathway cofactor biosynthesis; coenzyme A biosynthesis; CoA from (R)-pantothenate: step 1/5. The chain is Pantothenate kinase from Cutibacterium acnes (strain DSM 16379 / KPA171202) (Propionibacterium acnes).